Consider the following 304-residue polypeptide: Protein PagO (304 aa).

The next 10 helical transmembrane spans lie at 4–24 (VSIS…WLAM), 34–54 (VFAT…IAWL), 67–87 (LFQF…MIYG), 95–115 (LAAI…VLFL), 119–139 (AKLM…GILL), 150–170 (WQGI…YTQC), 180–200 (ITFN…TGWF), 214–234 (ILAT…CYFA), 246–266 (LVFL…YGYA), and 267–287 (ISTH…LTLV). EamA domains follow at residues 15–139 (LTWG…GILL) and 161–287 (LIHA…LTLV).

Belongs to the EamA transporter family.

Its subcellular location is the cell membrane. The protein is Protein PagO (pagO) of Salmonella typhimurium (strain LT2 / SGSC1412 / ATCC 700720).